The chain runs to 87 residues: UPF0250 protein PC1_1177 (87 aa).

This sequence belongs to the UPF0250 family.

The chain is UPF0250 protein PC1_1177 from Pectobacterium carotovorum subsp. carotovorum (strain PC1).